The following is a 339-amino-acid chain: Uracil nucleotide/cysteinyl leukotriene receptor (339 aa).

Residues 1–36 (MNGLEAALPSLTDNSSLAYSEQCGQETPLENMLFAC) lie on the Extracellular side of the membrane. Residue Asn-14 is glycosylated (N-linked (GlcNAc...) asparagine). Residues 37–57 (FYLLDFILAFVGNALALWLFI) traverse the membrane as a helical segment. The Cytoplasmic segment spans residues 58–64 (WDHKSGT). The chain crosses the membrane as a helical span at residues 65–85 (PANVFLMHLAVADLSCVLVLP). Topologically, residues 86-105 (TRLVYHFSGNHWPFGEIPCR) are extracellular. A disulfide bridge links Cys-104 with Cys-181. Residues 106 to 126 (LTGFLFYLNMYASIYFLTCIS) traverse the membrane as a helical segment. Over 127–147 (ADRFLAIVHPVKSLKLRRPLY) the chain is Cytoplasmic. Residues 148 to 168 (AHLACAFLWIVVAVAMAPLLV) form a helical membrane-spanning segment. The Extracellular segment spans residues 169 to 195 (SPQTVQTNHTVVCLQLYREKASHHALA). Asn-176 carries an N-linked (GlcNAc...) asparagine glycan. A helical transmembrane segment spans residues 196–216 (SLAVAFTFPFITTVTCYLLII). Over 217–232 (RSLRQGPRIEKHLKNK) the chain is Cytoplasmic. The chain crosses the membrane as a helical span at residues 233–253 (AVRMIAMVLAIFLICFVPYHI). Residues 254–280 (HRSVYVLHYRGGGTSCAAQRALALGNR) lie on the Extracellular side of the membrane. Residues 281–301 (ITSCLTSLNGALDPVMYFFVA) traverse the membrane as a helical segment. Topologically, residues 302 to 339 (EKFRHALCNLLCSKRLTGPPPSFEGKTNESSLSARSEL) are cytoplasmic.

It belongs to the G-protein coupled receptor 1 family.

It localises to the cell membrane. Its function is as follows. Dual specificity receptor for uracil nucleotides and cysteinyl leukotrienes (CysLTs). Signals through G(i) and inhibition of adenylyl cyclase. May mediate brain damage by nucleotides and CysLTs following ischemia. In Mus musculus (Mouse), this protein is Uracil nucleotide/cysteinyl leukotriene receptor.